Here is a 253-residue protein sequence, read N- to C-terminus: Triosephosphate isomerase (253 aa).

A substrate-binding site is contributed by 8–10 (NWK). Residue His-93 is the Electrophile of the active site. Glu-165 serves as the catalytic Proton acceptor. Substrate-binding positions include Gly-171, Ser-210, and 231–232 (GG).

This sequence belongs to the triosephosphate isomerase family. In terms of assembly, homodimer.

It is found in the cytoplasm. It carries out the reaction D-glyceraldehyde 3-phosphate = dihydroxyacetone phosphate. It participates in carbohydrate biosynthesis; gluconeogenesis. Its pathway is carbohydrate degradation; glycolysis; D-glyceraldehyde 3-phosphate from glycerone phosphate: step 1/1. Functionally, involved in the gluconeogenesis. Catalyzes stereospecifically the conversion of dihydroxyacetone phosphate (DHAP) to D-glyceraldehyde-3-phosphate (G3P). The protein is Triosephosphate isomerase of Francisella tularensis subsp. mediasiatica (strain FSC147).